We begin with the raw amino-acid sequence, 211 residues long: Uracil phosphoribosyltransferase (211 aa).

5-phospho-alpha-D-ribose 1-diphosphate contacts are provided by residues R78, R103, and 130-138 (DPMLATGGS). Uracil contacts are provided by residues I193 and 198–200 (GDA). 5-phospho-alpha-D-ribose 1-diphosphate is bound at residue D199.

The protein belongs to the UPRTase family. It depends on Mg(2+) as a cofactor.

It carries out the reaction UMP + diphosphate = 5-phospho-alpha-D-ribose 1-diphosphate + uracil. Its pathway is pyrimidine metabolism; UMP biosynthesis via salvage pathway; UMP from uracil: step 1/1. With respect to regulation, allosterically activated by GTP. In terms of biological role, catalyzes the conversion of uracil and 5-phospho-alpha-D-ribose 1-diphosphate (PRPP) to UMP and diphosphate. The sequence is that of Uracil phosphoribosyltransferase from Hahella chejuensis (strain KCTC 2396).